The primary structure comprises 180 residues: NAD(P)H-quinone oxidoreductase subunit I, chloroplastic (180 aa).

4Fe-4S ferredoxin-type domains lie at 55-84 (GRIH…VDWR) and 95-124 (LNYS…MTEE). Positions 64, 67, 70, 74, 104, 107, 110, and 114 each coordinate [4Fe-4S] cluster.

It belongs to the complex I 23 kDa subunit family. As to quaternary structure, NDH is composed of at least 16 different subunits, 5 of which are encoded in the nucleus. It depends on [4Fe-4S] cluster as a cofactor.

It is found in the plastid. The protein resides in the chloroplast thylakoid membrane. It catalyses the reaction a plastoquinone + NADH + (n+1) H(+)(in) = a plastoquinol + NAD(+) + n H(+)(out). The catalysed reaction is a plastoquinone + NADPH + (n+1) H(+)(in) = a plastoquinol + NADP(+) + n H(+)(out). Its function is as follows. NDH shuttles electrons from NAD(P)H:plastoquinone, via FMN and iron-sulfur (Fe-S) centers, to quinones in the photosynthetic chain and possibly in a chloroplast respiratory chain. The immediate electron acceptor for the enzyme in this species is believed to be plastoquinone. Couples the redox reaction to proton translocation, and thus conserves the redox energy in a proton gradient. This is NAD(P)H-quinone oxidoreductase subunit I, chloroplastic from Illicium oligandrum (Star anise).